Reading from the N-terminus, the 1139-residue chain is MSRRFTVTSLPPAGPARSPDPESRRHSVADPRHLPGEDVKGDGNPKESSPFINSTDTEKGKEYDGKNMALFEEEMDTSPMVSSLLSGLANYTNLPQGSREHEEAENNEGGKKKPVQAPRMGTFMGVYLPCLQNIFGVILFLRLTWVVGIAGIMESFCMVFICCSCTMLTAISMSAIATNGVVPAGGSYYMISRSLGPEFGGAVGLCFYLGTTFAGAMYILGTIEILLAYLFPAMAIFKAEDASGEAAAMLNNMRVYGTCVLTCMATVVFVGVKYVNKFALVFLGCVILSILAIYAGVIKSAFDPPNFPICLLGNRTLSRHGFDVCAKLAWEGNETVTTRLWGLFCSSRFLNATCDEYFTRNNVTEIQGIPGAASGLIKENLWSSYLTKGVIVERSGMTSVGLADGTPIDMDHPYVFSDMTSYFTLLVGIYFPSVTGIMAGSNRSGDLRDAQKSIPTGTILAIATTSAVYISSVVLFGACIEGVVLRDKFGEAVNGNLVVGTLAWPSPWVIVIGSFFSTCGAGLQSLTGAPRLLQAISRDGIVPFLQVFGHGKANGEPTWALLLTACICEIGILIASLDEVAPILSMFFLMCYMFVNLACAVQTLLRTPNWRPRFRYYHWTLSFLGMSLCLALMFICSWYYALVAMLIAGLIYKYIEYRGAEKEWGDGIRGLSLSAARYALLRLEEGPPHTKNWRPQLLVLVRVDQDQNVVHPQLLSLTSQLKAGKGLTIVGSVLEGTFLENHPQAQRAEESIRRLMEAEKVKGFCQVVISSNLRDGVSHLIQSGGLGGLQHNTVLVGWPRNWRQKEDHQTWRNFIELVRETTAGHLALLVTKNVSMFPGNPERFSEGSIDVWWIVHDGGMLMLLPFLLRHHKVWRKCKMRIFTVAQMDDNSIQMKKDLTTFLYHLRITAEVEVVEMHESDISAYTYEKTLVMEQRSQILKQMHLTKNEREREIQSITDESRGSIRRKNPANTRLRLNVPEETAGDSEEKPEEEVQLIHDQSAPSCPSSSPSPGEEPEGEGETDPEKVHLTWTKDKSVAEKNKGPSPVSSEGIKDFFSMKPEWENLNQSNVRRMHTAVRLNEVIVKKSRDAKLVLLNMPGPPRNRNGDENYMEFLEVLTEHLDRVMLVRGGGREVITIYS.

Disordered stretches follow at residues 1–63 (MSRR…GKEY) and 92–116 (TNLP…KPVQ). Over 1–98 (MSRRFTVTSL…ANYTNLPQGS (98 aa)) the chain is Cytoplasmic. The segment covering 19–45 (PDPESRRHSVADPRHLPGEDVKGDGNP) has biased composition (basic and acidic residues). Polar residues predominate over residues 46-55 (KESSPFINST). Thr57 is modified (phosphothreonine). Over residues 98–111 (SREHEEAENNEGGK) the composition is skewed to basic and acidic residues. The discontinuously helical transmembrane segment at 99–120 (REHEEAENNEGGKKKPVQAPRM) threads the bilayer. Lys113 contacts K(+). The Extracellular portion of the chain corresponds to 121 to 129 (GTFMGVYLP). A helical transmembrane segment spans residues 130-151 (CLQNIFGVILFLRLTWVVGIAG). At 152-174 (IMESFCMVFICCSCTMLTAISMS) the chain is on the cytoplasmic side. A helical transmembrane segment spans residues 175 to 203 (AIATNGVVPAGGSYYMISRSLGPEFGGAV). Residue Ala184 participates in chloride binding. Over 204 to 229 (GLCFYLGTTFAGAMYILGTIEILLAY) the chain is Extracellular. A run of 2 helical transmembrane segments spans residues 230 to 250 (LFPA…AAML) and 251 to 276 (NNMR…KYVN). The Extracellular segment spans residues 277–402 (KFALVFLGCV…ERSGMTSVGL (126 aa)). A disulfide bridge links Cys310 with Cys325. Residues Asn314, Asn333, Asn351, and Asn362 are each glycosylated (N-linked (GlcNAc...) asparagine). The cysteines at positions 345 and 354 are disulfide-linked. Residues 403 to 420 (ADGTPIDMDHPYVFSDMT) traverse the membrane as a helical segment. Met410 contributes to the K(+) binding site. 2 residues coordinate chloride: Tyr414 and Val415. The Cytoplasmic portion of the chain corresponds to 421–429 (SYFTLLVGI). The chain crosses the membrane as a helical span at residues 430–453 (YFPSVTGIMAGSNRSGDLRDAQKS). Asp446 contributes to the K(+) binding site. The Extracellular portion of the chain corresponds to 454–485 (IPTGTILAIATTSAVYISSVVLFGACIEGVVL). The helical transmembrane segment at 486-513 (RDKFGEAVNGNLVVGTLAWPSPWVIVIG) threads the bilayer. Topologically, residues 514-534 (SFFSTCGAGLQSLTGAPRLLQ) are cytoplasmic. Transmembrane regions (helical) follow at residues 535–555 (AISR…KANG) and 556–578 (EPTW…ASLD). Residue Glu569 coordinates chloride. Residues 579-592 (EVAPILSMFFLMCY) lie on the Cytoplasmic side of the membrane. A run of 2 helical transmembrane segments spans residues 593–615 (MFVN…PRFR) and 616–632 (YYHW…CLAL). Topologically, residues 633 to 1139 (MFICSWYYAL…GGREVITIYS (507 aa)) are cytoplasmic. The segment at 667-681 (GIRGLSLSAARYALL) is scissor helix. At Thr929 the chain carries Phosphothreonine; by OXSR1 and STK39. Residues 942–1052 (MHLTKNERER…GPSPVSSEGI (111 aa)) form a disordered region. The span at 945–962 (TKNEREREIQSITDESRG) shows a compositional bias: basic and acidic residues. Over residues 982-994 (TAGDSEEKPEEEV) the composition is skewed to acidic residues. Low complexity predominate over residues 1003-1012 (PSCPSSSPSP). Over residues 1023-1042 (DPEKVHLTWTKDKSVAEKNK) the composition is skewed to basic and acidic residues. Thr1030 carries the post-translational modification Phosphothreonine; by OXSR1 and STK39. A phosphoserine mark is found at Ser1045, Ser1048, and Ser1049.

Belongs to the SLC12A transporter family. K/Cl co-transporter subfamily. In terms of assembly, homodimer; adopts a domain-swap conformation at the scissor helices connecting the transmembrane domain and C-terminal domain. Heterodimer with K-Cl cotransporters SLC12A6 and SLC12A7. Interacts with AP2A1. Phosphorylated at Thr-929 and Thr-1030 by OXSR1/OSR1 and STK39/SPAK downstream of WNK kinases (WNK1, WNK2, WNK3 or WNK4), inhibiting the potassium-chloride cotransport activity. Brain specific. Detected in neuronal cells.

It is found in the cell membrane. Its subcellular location is the cell projection. It localises to the dendrite. It catalyses the reaction K(+)(in) + chloride(in) = K(+)(out) + chloride(out). Its activity is regulated as follows. Inhibited following phosphorylation by OXSR1/OSR1 and STK39/SPAK: phosphorylation takes place downstream of WNK kinases (WNK1, WNK2, WNK3 or WNK4) in response to hyperosmotic stress and subsequent cell shrinkage. Its function is as follows. Mediates electroneutral potassium-chloride cotransport in mature neurons and is required for neuronal Cl(-) homeostasis. As major extruder of intracellular chloride, it establishes the low neuronal Cl(-) levels required for chloride influx after binding of GABA-A and glycine to their receptors, with subsequent hyperpolarization and neuronal inhibition. Involved in the regulation of dendritic spine formation and maturation. This is Solute carrier family 12 member 5 from Homo sapiens (Human).